The following is a 90-amino-acid chain: Small ribosomal subunit protein uS15c (90 aa).

This sequence belongs to the universal ribosomal protein uS15 family. In terms of assembly, part of the 30S ribosomal subunit.

The protein resides in the plastid. The protein localises to the chloroplast. The protein is Small ribosomal subunit protein uS15c (rps15-A) of Oryza nivara (Indian wild rice).